The primary structure comprises 357 residues: UPF0283 membrane protein BCAN_A1047 (357 aa).

A disordered region spans residues 1-36 (MSDKTPRKPTAFRLEQPARVSAASEQEEPRRPRAVK). Residues 27–36 (EEPRRPRAVK) are compositionally biased toward basic and acidic residues. Transmembrane regions (helical) follow at residues 78-98 (ILFGALGILVSFAIGIWTEDL) and 109-129 (LGWTALGVAMVALAAFAAIIL).

This sequence belongs to the UPF0283 family.

It is found in the cell inner membrane. In Brucella canis (strain ATCC 23365 / NCTC 10854 / RM-666), this protein is UPF0283 membrane protein BCAN_A1047.